An 804-amino-acid chain; its full sequence is Elongation factor G, mitochondrial (804 aa).

The transit peptide at 1–63 (MSMHRVARAV…RHFSQSPIIR (63 aa)) directs the protein to the mitochondrion. The tr-type G domain maps to 99 to 385 (RRVRNIGIAA…AVCDYLPNPA (287 aa)). Residues 108 to 115 (AHIDSGKT), 183 to 187 (DTPGH), and 237 to 240 (NKMD) each bind GTP.

The protein belongs to the TRAFAC class translation factor GTPase superfamily. Classic translation factor GTPase family. EF-G/EF-2 subfamily.

The protein localises to the mitochondrion. Its pathway is protein biosynthesis; polypeptide chain elongation. Its function is as follows. Mitochondrial GTPase that catalyzes the GTP-dependent ribosomal translocation step during translation elongation. During this step, the ribosome changes from the pre-translocational (PRE) to the post-translocational (POST) state as the newly formed A-site-bound peptidyl-tRNA and P-site-bound deacylated tRNA move to the P and E sites, respectively. Catalyzes the coordinated movement of the two tRNA molecules, the mRNA and conformational changes in the ribosome. This Botryotinia fuckeliana (strain B05.10) (Noble rot fungus) protein is Elongation factor G, mitochondrial (mef1).